Consider the following 261-residue polypeptide: Carnitinyl-CoA dehydratase (261 aa).

E111 functions as the Nucleophile in the catalytic mechanism. E131 functions as the Proton acceptor in the catalytic mechanism.

Belongs to the enoyl-CoA hydratase/isomerase family.

It catalyses the reaction (R)-carnitinyl-CoA = crotonobetainyl-CoA + H2O. It participates in amine and polyamine metabolism; carnitine metabolism. In terms of biological role, catalyzes the reversible dehydration of L-carnitinyl-CoA to crotonobetainyl-CoA. This chain is Carnitinyl-CoA dehydratase, found in Salmonella arizonae (strain ATCC BAA-731 / CDC346-86 / RSK2980).